Here is a 180-residue protein sequence, read N- to C-terminus: UPF0227 protein CKO_01948 (180 aa).

It belongs to the UPF0227 family.

The protein is UPF0227 protein CKO_01948 of Citrobacter koseri (strain ATCC BAA-895 / CDC 4225-83 / SGSC4696).